The chain runs to 416 residues: Probable 26S proteasome regulatory subunit rpn-6.2 (416 aa).

A PCI domain is found at 217-386 (YKTSFSYFYE…DTVVVYPKAD (170 aa)).

Belongs to the proteasome subunit S9 family. As to quaternary structure, component of the lid subcomplex of the 19S proteasome regulatory particle complex (also named PA700 complex). The 26S proteasome consists of a 20S proteasome core and two 19S regulatory subunits.

In terms of biological role, component of the lid subcomplex of the 26S proteasome, a multiprotein complex involved in the ATP-dependent degradation of ubiquitinated proteins. In the complex, rpn-6.2 is required for proteasome assembly. The protein is Probable 26S proteasome regulatory subunit rpn-6.2 (rpn-6.2) of Caenorhabditis elegans.